A 315-amino-acid polypeptide reads, in one-letter code: COMPASS component SWD3 (315 aa).

WD repeat units lie at residues 53-93 (SHAR…HTFI), 94-133 (GHTAPVISLTFNRKGNLLFTSSMDESIKIWDTLNGSLMKT), 136-178 (AHSE…KTLT), 187-228 (NGVV…RTFQ), 238-278 (HHSC…LLQL), and 285-315 (HHSSPVMSIHCFGNIMCSLALNGDCCLWRWV).

In terms of assembly, component of the Set1C/COMPASS complex which consists of SET1(2), BRE2(2), SPP1(2), SDC1(1), SHG1(1), SWD1(1), SWD2(1), and SWD3(1).

The protein localises to the nucleus. Its subcellular location is the chromosome. It is found in the telomere. Its function is as follows. The COMPASS (Set1C) complex specifically mono-, di- and trimethylates histone H3 to form H3K4me1/2/3, which subsequently plays a role in telomere length maintenance and transcription elongation regulation. COMPASS recognizes ubiquitinated H2B on one face of the nucleosome which stimulates the methylation of H3 on the opposing face. SWD3/CPS30 establishes COMPASS trimethylation activity and may also serve as the anchor point to properly tether and space the other subunits. The chain is COMPASS component SWD3 from Saccharomyces cerevisiae (strain ATCC 204508 / S288c) (Baker's yeast).